Consider the following 104-residue polypeptide: Biogenesis of lysosome-related organelles complex 1 subunit BLS1 (104 aa).

This sequence belongs to the BLOC1S1 family. In terms of assembly, component of the biogenesis of lysosome-related organelles complex-1 (BLOC-1).

Its subcellular location is the endosome. Its function is as follows. Component of the biogenesis of lysosome-related organelles complex-1 (BLOC-1), a complex involved in endosomal cargo sorting. The chain is Biogenesis of lysosome-related organelles complex 1 subunit BLS1 (BLS1) from Kluyveromyces lactis (strain ATCC 8585 / CBS 2359 / DSM 70799 / NBRC 1267 / NRRL Y-1140 / WM37) (Yeast).